The primary structure comprises 189 residues: Movement protein p22 (189 aa).

It belongs to the tombusvirus/aureusvirus movement protein p22 family. Interacts with host protein HFI22. Phosphorylated.

It localises to the host membrane. Cell-to-cell movement. Displays RNA-binding activity. The polypeptide is Movement protein p22 (Capsicum annuum (Capsicum pepper)).